The following is a 178-amino-acid chain: Small ribosomal subunit protein uS4 (178 aa).

The region spanning 104–166 (RRLQTMVYKK…PNSPMASENH (63 aa)) is the S4 RNA-binding domain. Positions 157 to 178 (PNSPMASENHPERTAAVSEENQ) are disordered.

The protein belongs to the universal ribosomal protein uS4 family. In terms of assembly, part of the 30S ribosomal subunit. Contacts protein S5. The interaction surface between S4 and S5 is involved in control of translational fidelity.

Functionally, one of the primary rRNA binding proteins, it binds directly to 16S rRNA where it nucleates assembly of the body of the 30S subunit. In terms of biological role, with S5 and S12 plays an important role in translational accuracy. This Methanococcus maripaludis (strain C7 / ATCC BAA-1331) protein is Small ribosomal subunit protein uS4.